A 415-amino-acid polypeptide reads, in one-letter code: Hydroxysteroid dehydrogenase-like protein 2 (415 aa).

Residues G17–G23, K42, and D74 contribute to the NADP(+) site. The Proton acceptor role is filled by Y168. Residue K172 coordinates NADP(+). An SCP2 domain is found at A304–K412.

The protein belongs to the short-chain dehydrogenases/reductases (SDR) family.

The protein resides in the peroxisome. Its subcellular location is the mitochondrion. In terms of biological role, has apparently no steroid dehydrogenase activity. Might act as a metabolic regulator that affects systemic adaptation to nutritional cues. This Danio rerio (Zebrafish) protein is Hydroxysteroid dehydrogenase-like protein 2 (hsdl2).